Reading from the N-terminus, the 343-residue chain is Aspartate-semialdehyde dehydrogenase (343 aa).

NADP(+) is bound by residues 13-16 and 41-42; these read TGAV and KS. Arg-103 serves as a coordination point for phosphate. Residue Cys-134 is the Acyl-thioester intermediate of the active site. Residue Gln-161 participates in substrate binding. Position 164 to 165 (164 to 165) interacts with NADP(+); that stretch reads SG. Residue Lys-220 participates in phosphate binding. Arg-241 contacts substrate. His-248 (proton acceptor) is an active-site residue. Position 321 (Gln-321) interacts with NADP(+).

The protein belongs to the aspartate-semialdehyde dehydrogenase family. In terms of assembly, homodimer.

The enzyme catalyses L-aspartate 4-semialdehyde + phosphate + NADP(+) = 4-phospho-L-aspartate + NADPH + H(+). Its pathway is amino-acid biosynthesis; L-lysine biosynthesis via DAP pathway; (S)-tetrahydrodipicolinate from L-aspartate: step 2/4. It functions in the pathway amino-acid biosynthesis; L-methionine biosynthesis via de novo pathway; L-homoserine from L-aspartate: step 2/3. The protein operates within amino-acid biosynthesis; L-threonine biosynthesis; L-threonine from L-aspartate: step 2/5. Its function is as follows. Catalyzes the NADPH-dependent formation of L-aspartate-semialdehyde (L-ASA) by the reductive dephosphorylation of L-aspartyl-4-phosphate. The polypeptide is Aspartate-semialdehyde dehydrogenase (Campylobacter jejuni subsp. jejuni serotype O:2 (strain ATCC 700819 / NCTC 11168)).